A 111-amino-acid polypeptide reads, in one-letter code: Universal stress protein B (111 aa).

A helical membrane pass occupies residues 1-21; sequence MISTVSLFWALCVVCIVNMAR. At 22–89 the chain is on the cytoplasmic side; the sequence is YFSSLRALLV…IRRCERVRRQ (68 aa). A helical transmembrane segment spans residues 90–110; that stretch reads FLLTSALCGLVVVSLIALMIW. A topological domain (periplasmic) is located at residue histidine 111.

Belongs to the universal stress protein B family.

The protein resides in the cell inner membrane. This is Universal stress protein B (uspB) from Salmonella choleraesuis (strain SC-B67).